We begin with the raw amino-acid sequence, 958 residues long: UPF0182 protein TW644 (958 aa).

Transmembrane regions (helical) follow at residues 14–34 (IAIL…FFLV), 59–79 (IFVV…LCMF), 107–127 (KIVV…FAAS), 166–186 (LFFL…ISVV), 205–225 (VQYA…FWLN), 249–269 (LIPG…LFCI), and 280–300 (IIGV…LPWG).

Belongs to the UPF0182 family.

It localises to the cell membrane. This Tropheryma whipplei (strain TW08/27) (Whipple's bacillus) protein is UPF0182 protein TW644.